We begin with the raw amino-acid sequence, 547 residues long: Phosphatidylinositol/phosphatidylcholine transfer protein SFH7 (547 aa).

Residues 130–304 (EIDQVLKHYP…FFGGLCTCAD (175 aa)) enclose the CRAL-TRIO domain. A coiled-coil region spans residues 464–526 (SSEYVIMVKR…KKALDETMVN (63 aa)).

Belongs to the SFH family.

Its subcellular location is the golgi apparatus membrane. The protein localises to the cell membrane. Required for transport of secretory proteins from the Golgi complex. Catalyzes the transfer of phosphatidylinositol and phosphatidylcholine between membranes in vitro. The chain is Phosphatidylinositol/phosphatidylcholine transfer protein SFH7 (SFH7) from Arabidopsis thaliana (Mouse-ear cress).